Here is a 373-residue protein sequence, read N- to C-terminus: SAM domain-containing protein SAMSN-1 (373 aa).

Residues 1 to 72 are disordered; the sequence is MLKRKPSNVS…GGGLGKKMRA (72 aa). An Important for interaction with 14-3-3 proteins motif is present at residues 20–25; the sequence is RSSSFG. S23 and S34 each carry phosphoserine. The span at 37 to 48 shows a compositional bias: basic and acidic residues; that stretch reads KPDDSTEAHEGD. The span at 50 to 61 shows a compositional bias: polar residues; the sequence is TNGSGEQSKTSN. Residue S74 is modified to Phosphoserine. Position 76 is a phosphothreonine (T76). 2 positions are modified to phosphoserine: S90 and S119. The tract at residues 91–153 is disordered; sequence EEKDEEDGEN…DGTSNRDSFR (63 aa). Residues 123–146 show a composition bias toward low complexity; it reads SDSMDSLYSGQSSSSGITSCSDGT. Y160 carries the post-translational modification Phosphotyrosine. An SH3 domain is found at 163 to 224; sequence PFCGRARVHT…KFIYVDVISE (62 aa). Residues 241-305 enclose the SAM domain; the sequence is KKSKTLQEFL…LSAAENFLEE (65 aa). Residues 337–359 are disordered; sequence DSGCYISSGNSDNGKEDLESENL.

Interacts with FASLG. Interacts with phosphotyrosine containing proteins. Interacts (via SH3 domain) with CTTN. Interacts (phosphorylated at Ser-23) with YWHAB, YWHAE, YWHAG, YWHAH, YWHAZ and SFN. Interacts directly with SAP30 and HDAC1. Identified in a complex with SAP30 and HDAC1. Detected in peripheral blood B-cells (at protein level). Detected in spleen, liver and peripheral blood.

Its subcellular location is the nucleus. It is found in the cytoplasm. The protein localises to the cell projection. The protein resides in the ruffle. Negative regulator of B-cell activation. Down-regulates cell proliferation (in vitro). Promotes RAC1-dependent membrane ruffle formation and reorganization of the actin cytoskeleton. Regulates cell spreading and cell polarization. Stimulates HDAC1 activity. Regulates LYN activity by modulating its tyrosine phosphorylation. The protein is SAM domain-containing protein SAMSN-1 (SAMSN1) of Homo sapiens (Human).